The primary structure comprises 113 residues: Protein suex-1 (113 aa).

An N-terminal signal peptide occupies residues 1 to 22; the sequence is MQSLLVFCLATIILSNFTEASA.

This Caenorhabditis elegans protein is Protein suex-1.